The sequence spans 315 residues: Mitochondrial outer membrane import complex protein METAXIN (315 aa).

Met-1 carries the post-translational modification N-acetylmethionine. Residues 157 to 181 (ENAEQREKQIYKRASEAYEALSTRL) are a coiled coil. Residues 195 to 215 (LDAFLLSHILFIIQALPVTSV) form a helical membrane-spanning segment. The interval 240–277 (ASSSSPSPPLHSFPSSFPRKSSKPKSKPKVEKTEEEKK) is disordered. Positions 267 to 277 (PKVEKTEEEKK) are enriched in basic and acidic residues. Residues 284-304 (FFLAAQFLAVVIYVSVMGGGS) form a helical membrane-spanning segment.

It belongs to the metaxin family. As to quaternary structure, part of a high molecular weight complex that is distinct from the TOM complex. Interacts with a variety of mitochondrial precursor proteins. In terms of tissue distribution, expressed in roots, young cotyledons, flowers and leaves.

It is found in the mitochondrion inner membrane. Its subcellular location is the mitochondrion outer membrane. Involved in transport of proteins into the mitochondrion. This Arabidopsis thaliana (Mouse-ear cress) protein is Mitochondrial outer membrane import complex protein METAXIN (MTX1).